We begin with the raw amino-acid sequence, 85 residues long: Antitoxin VapB43 (85 aa).

The segment at Gly37–Arg60 is disordered.

Its function is as follows. Antitoxin component of a type II toxin-antitoxin (TA) system. The polypeptide is Antitoxin VapB43 (vapB43) (Mycobacterium tuberculosis (strain CDC 1551 / Oshkosh)).